We begin with the raw amino-acid sequence, 72 residues long: Large ribosomal subunit protein bL31 (72 aa).

The Zn(2+) site is built by Cys-17, Cys-19, Cys-37, and Cys-40.

It belongs to the bacterial ribosomal protein bL31 family. Type A subfamily. As to quaternary structure, part of the 50S ribosomal subunit. Zn(2+) serves as cofactor.

Binds the 23S rRNA. This is Large ribosomal subunit protein bL31 from Clostridium botulinum (strain Loch Maree / Type A3).